We begin with the raw amino-acid sequence, 295 residues long: Small ribosomal subunit biogenesis GTPase RsgA (295 aa).

The region spanning 68-228 is the CP-type G domain; sequence KNLLVKPHVA…VVDTPGFANL (161 aa). Residues 117-120 and 170-178 contribute to the GTP site; these read NKMD and GLSGVGKSS. Residues cysteine 250, cysteine 255, histidine 257, and cysteine 263 each contribute to the Zn(2+) site.

This sequence belongs to the TRAFAC class YlqF/YawG GTPase family. RsgA subfamily. In terms of assembly, monomer. Associates with 30S ribosomal subunit, binds 16S rRNA. Requires Zn(2+) as cofactor.

The protein resides in the cytoplasm. One of several proteins that assist in the late maturation steps of the functional core of the 30S ribosomal subunit. Helps release RbfA from mature subunits. May play a role in the assembly of ribosomal proteins into the subunit. Circularly permuted GTPase that catalyzes slow GTP hydrolysis, GTPase activity is stimulated by the 30S ribosomal subunit. This chain is Small ribosomal subunit biogenesis GTPase RsgA, found in Thermotoga neapolitana (strain ATCC 49049 / DSM 4359 / NBRC 107923 / NS-E).